Here is a 472-residue protein sequence, read N- to C-terminus: tRNA-2-methylthio-N(6)-dimethylallyladenosine synthase (472 aa).

An MTTase N-terminal domain is found at 22–142 (RKVFVKTYGC…LPDALKRARA (121 aa)). [4Fe-4S] cluster-binding residues include cysteine 31, cysteine 67, cysteine 105, cysteine 183, cysteine 187, and cysteine 190. The region spanning 169 to 403 (RARGVTAFLT…LLVKQQRGFA (235 aa)) is the Radical SAM core domain. The TRAM domain occupies 404–466 (EACVGREIDL…PNSLFAEMIG (63 aa)).

This sequence belongs to the methylthiotransferase family. MiaB subfamily. As to quaternary structure, monomer. [4Fe-4S] cluster serves as cofactor.

It is found in the cytoplasm. The catalysed reaction is N(6)-dimethylallyladenosine(37) in tRNA + (sulfur carrier)-SH + AH2 + 2 S-adenosyl-L-methionine = 2-methylsulfanyl-N(6)-dimethylallyladenosine(37) in tRNA + (sulfur carrier)-H + 5'-deoxyadenosine + L-methionine + A + S-adenosyl-L-homocysteine + 2 H(+). Its function is as follows. Catalyzes the methylthiolation of N6-(dimethylallyl)adenosine (i(6)A), leading to the formation of 2-methylthio-N6-(dimethylallyl)adenosine (ms(2)i(6)A) at position 37 in tRNAs that read codons beginning with uridine. The chain is tRNA-2-methylthio-N(6)-dimethylallyladenosine synthase from Rhizobium meliloti (strain 1021) (Ensifer meliloti).